Consider the following 289-residue polypeptide: NADPH-dependent 7-cyano-7-deazaguanine reductase (289 aa).

81 to 83 (IES) contributes to the substrate binding site. Residue 83–84 (SK) participates in NADPH binding. Residue C196 is the Thioimide intermediate of the active site. D203 serves as the catalytic Proton donor. Residue 235-236 (HE) participates in substrate binding. NADPH is bound at residue 264–265 (RG).

Belongs to the GTP cyclohydrolase I family. QueF type 2 subfamily. As to quaternary structure, homodimer.

The protein resides in the cytoplasm. It carries out the reaction 7-aminomethyl-7-carbaguanine + 2 NADP(+) = 7-cyano-7-deazaguanine + 2 NADPH + 3 H(+). It participates in tRNA modification; tRNA-queuosine biosynthesis. Catalyzes the NADPH-dependent reduction of 7-cyano-7-deazaguanine (preQ0) to 7-aminomethyl-7-deazaguanine (preQ1). The polypeptide is NADPH-dependent 7-cyano-7-deazaguanine reductase (Albidiferax ferrireducens (strain ATCC BAA-621 / DSM 15236 / T118) (Rhodoferax ferrireducens)).